The following is an 85-amino-acid chain: MAHKKAGGSTNNGRDSESKRLGVKRFGGESVLAGNIIVRQRGTKFHAGTNVGIGKDHTLFALTEGKVKFAVKGPKNRKFVSIEAE.

Positions 1-22 are disordered; sequence MAHKKAGGSTNNGRDSESKRLG.

This sequence belongs to the bacterial ribosomal protein bL27 family.

This Vibrio atlanticus (strain LGP32) (Vibrio splendidus (strain Mel32)) protein is Large ribosomal subunit protein bL27.